Here is a 148-residue protein sequence, read N- to C-terminus: Large ribosomal subunit protein bL9 (148 aa).

This sequence belongs to the bacterial ribosomal protein bL9 family.

Binds to the 23S rRNA. In Agathobacter rectalis (strain ATCC 33656 / DSM 3377 / JCM 17463 / KCTC 5835 / VPI 0990) (Eubacterium rectale), this protein is Large ribosomal subunit protein bL9.